A 94-amino-acid chain; its full sequence is MDARDIIKRPVVTEESTSILDDKKYTFEVDTRATKTQVKYAIEEIFDVKVAKVNVMNYKGKLKRMGRYAGYTNKRRKAIVTVTADSKEIQFFEV.

It belongs to the universal ribosomal protein uL23 family. As to quaternary structure, part of the 50S ribosomal subunit. Contacts protein L29, and trigger factor when it is bound to the ribosome.

One of the early assembly proteins it binds 23S rRNA. One of the proteins that surrounds the polypeptide exit tunnel on the outside of the ribosome. Forms the main docking site for trigger factor binding to the ribosome. The polypeptide is Large ribosomal subunit protein uL23 (Listeria innocua serovar 6a (strain ATCC BAA-680 / CLIP 11262)).